Consider the following 151-residue polypeptide: Small ribosomal subunit protein uS15 (151 aa).

The disordered stretch occupies residues 1–20 (MGRMHSNGKGISGSSLPYNR).

The protein belongs to the universal ribosomal protein uS15 family. Component of the small ribosomal subunit. Part of the small subunit (SSU) processome, composed of more than 70 proteins and the RNA chaperone small nucleolar RNA (snoRNA) U3.

Its subcellular location is the cytoplasm. The protein localises to the nucleus. It localises to the nucleolus. Its function is as follows. Component of the small ribosomal subunit. The ribosome is a large ribonucleoprotein complex responsible for the synthesis of proteins in the cell. Part of the small subunit (SSU) processome, first precursor of the small eukaryotic ribosomal subunit. During the assembly of the SSU processome in the nucleolus, many ribosome biogenesis factors, an RNA chaperone and ribosomal proteins associate with the nascent pre-rRNA and work in concert to generate RNA folding, modifications, rearrangements and cleavage as well as targeted degradation of pre-ribosomal RNA by the RNA exosome. This is Small ribosomal subunit protein uS15 (rps13) from Dictyostelium discoideum (Social amoeba).